Here is a 72-residue protein sequence, read N- to C-terminus: Translation initiation factor IF-1 (72 aa).

Residues 1–72 form the S1-like domain; the sequence is MAKDDVIEVE…TRGRITYRYK (72 aa). A Phosphotyrosine modification is found at Tyr-60.

The protein belongs to the IF-1 family. In terms of assembly, component of the 30S ribosomal translation pre-initiation complex which assembles on the 30S ribosome in the order IF-2 and IF-3, IF-1 and N-formylmethionyl-tRNA(fMet); mRNA recruitment can occur at any time during PIC assembly.

The protein localises to the cytoplasm. Functionally, one of the essential components for the initiation of protein synthesis. Stabilizes the binding of IF-2 and IF-3 on the 30S subunit to which N-formylmethionyl-tRNA(fMet) subsequently binds. Helps modulate mRNA selection, yielding the 30S pre-initiation complex (PIC). Upon addition of the 50S ribosomal subunit IF-1, IF-2 and IF-3 are released leaving the mature 70S translation initiation complex. This Bacillus pumilus (strain SAFR-032) protein is Translation initiation factor IF-1.